The chain runs to 128 residues: Large ribosomal subunit protein bL17 (128 aa).

Belongs to the bacterial ribosomal protein bL17 family. In terms of assembly, part of the 50S ribosomal subunit. Contacts protein L32.

The polypeptide is Large ribosomal subunit protein bL17 (Pseudomonas fluorescens (strain Pf0-1)).